The sequence spans 120 residues: NAD(P)H-quinone oxidoreductase subunit 3, chloroplastic (120 aa).

The next 3 helical transmembrane spans lie at 2–22, 64–84, and 88–108; these read FLLYEYDIFWAFLIISSVIPI, MFALVFVVFDVETIFLYPWAL, and ILGVSVFIEALIFVLILVLGL.

Belongs to the complex I subunit 3 family. In terms of assembly, NDH is composed of at least 16 different subunits, 5 of which are encoded in the nucleus.

It is found in the plastid. The protein resides in the chloroplast thylakoid membrane. The catalysed reaction is a plastoquinone + NADH + (n+1) H(+)(in) = a plastoquinol + NAD(+) + n H(+)(out). The enzyme catalyses a plastoquinone + NADPH + (n+1) H(+)(in) = a plastoquinol + NADP(+) + n H(+)(out). Functionally, NDH shuttles electrons from NAD(P)H:plastoquinone, via FMN and iron-sulfur (Fe-S) centers, to quinones in the photosynthetic chain and possibly in a chloroplast respiratory chain. The immediate electron acceptor for the enzyme in this species is believed to be plastoquinone. Couples the redox reaction to proton translocation, and thus conserves the redox energy in a proton gradient. This is NAD(P)H-quinone oxidoreductase subunit 3, chloroplastic from Oenothera biennis (German evening primrose).